The sequence spans 180 residues: Protein SPMIP9 (180 aa).

Microtubule inner protein component of sperm flagellar doublet microtubules.

It localises to the nucleus. The protein localises to the cytoplasm. Its subcellular location is the cytoskeleton. It is found in the flagellum axoneme. In terms of biological role, microtubule inner protein (MIP) part of the dynein-decorated doublet microtubules (DMTs) in flagella axoneme. This Bos taurus (Bovine) protein is Protein SPMIP9 (SPMIP9).